The sequence spans 74 residues: MSATPHTQVHWEENTARPCRKCKWQTPDPTDPLRGQCTVNRHAMGGVWKRWIRDVEHMTCSRHEEGELSFRDHV.

Heterohexamer composed of 2 alpha subunits, 2 beta subunits and 2 gamma subunits.

The catalysed reaction is toluene + fumarate = 2-benzylsuccinate. It participates in xenobiotic degradation; toluene degradation. With respect to regulation, activated by the benzylsuccinate synthase activating enzyme BssD. Rapidly inactivated by oxygen. Functionally, catalyzes the addition of fumarate to the methyl group of toluene, leading to the formation of benzylsuccinate. This chain is Benzylsuccinate synthase beta subunit (bssB), found in Thauera aromatica.